We begin with the raw amino-acid sequence, 365 residues long: UDP-N-acetylglucosamine--N-acetylmuramyl-(pentapeptide) pyrophosphoryl-undecaprenol N-acetylglucosamine transferase (365 aa).

Residues 10 to 12 (TGG), N128, R170, S199, I250, and Q295 contribute to the UDP-N-acetyl-alpha-D-glucosamine site.

It belongs to the glycosyltransferase 28 family. MurG subfamily.

Its subcellular location is the cell inner membrane. It carries out the reaction di-trans,octa-cis-undecaprenyl diphospho-N-acetyl-alpha-D-muramoyl-L-alanyl-D-glutamyl-meso-2,6-diaminopimeloyl-D-alanyl-D-alanine + UDP-N-acetyl-alpha-D-glucosamine = di-trans,octa-cis-undecaprenyl diphospho-[N-acetyl-alpha-D-glucosaminyl-(1-&gt;4)]-N-acetyl-alpha-D-muramoyl-L-alanyl-D-glutamyl-meso-2,6-diaminopimeloyl-D-alanyl-D-alanine + UDP + H(+). It participates in cell wall biogenesis; peptidoglycan biosynthesis. Its function is as follows. Cell wall formation. Catalyzes the transfer of a GlcNAc subunit on undecaprenyl-pyrophosphoryl-MurNAc-pentapeptide (lipid intermediate I) to form undecaprenyl-pyrophosphoryl-MurNAc-(pentapeptide)GlcNAc (lipid intermediate II). This chain is UDP-N-acetylglucosamine--N-acetylmuramyl-(pentapeptide) pyrophosphoryl-undecaprenol N-acetylglucosamine transferase, found in Chlorobium luteolum (strain DSM 273 / BCRC 81028 / 2530) (Pelodictyon luteolum).